A 450-amino-acid chain; its full sequence is Probable ECA polymerase (450 aa).

A run of 11 helical transmembrane segments spans residues 6 to 26 (FSGL…LTWF), 37 to 57 (VFFS…TSVL), 63 to 83 (VGVA…CFYA), 120 to 140 (LMGI…FLLF), 155 to 175 (GVAL…IYFL), 181 to 201 (AWLF…MIVG), 207 to 227 (IIIA…ISLW), 228 to 248 (MLVA…LKRY), 341 to 361 (LVVM…GLII), 378 to 398 (YKAA…IVLA), and 410 to 430 (VFFL…FWLF).

The protein belongs to the WzyE family. In terms of assembly, probably part of a complex composed of WzxE, WzyE and WzzE.

The protein resides in the cell inner membrane. It participates in bacterial outer membrane biogenesis; enterobacterial common antigen biosynthesis. Probably involved in the polymerization of enterobacterial common antigen (ECA) trisaccharide repeat units. This chain is Probable ECA polymerase, found in Citrobacter koseri (strain ATCC BAA-895 / CDC 4225-83 / SGSC4696).